The primary structure comprises 701 residues: Elongation factor G (701 aa).

Positions 6-286 (KFTRNIGIAA…YVMELLPSPL (281 aa)) constitute a tr-type G domain. Residues 15-22 (AHIDAGKT), 83-87 (DTPGH), and 137-140 (NKMD) contribute to the GTP site.

Belongs to the TRAFAC class translation factor GTPase superfamily. Classic translation factor GTPase family. EF-G/EF-2 subfamily.

The protein resides in the cytoplasm. Its function is as follows. Catalyzes the GTP-dependent ribosomal translocation step during translation elongation. During this step, the ribosome changes from the pre-translocational (PRE) to the post-translocational (POST) state as the newly formed A-site-bound peptidyl-tRNA and P-site-bound deacylated tRNA move to the P and E sites, respectively. Catalyzes the coordinated movement of the two tRNA molecules, the mRNA and conformational changes in the ribosome. The protein is Elongation factor G of Cytophaga hutchinsonii (strain ATCC 33406 / DSM 1761 / CIP 103989 / NBRC 15051 / NCIMB 9469 / D465).